A 151-amino-acid chain; its full sequence is Transcriptional repressor NrdR (151 aa).

The segment at 3–34 is a zinc-finger region; sequence CPFCHNDQSRVIDSRVIDSGSAIRRRRECTQC. The 91-residue stretch at 46–136 folds into the ATP-cone domain; the sequence is LLVVKRNGLT…VYKSFESADD (91 aa).

Belongs to the NrdR family. Zn(2+) is required as a cofactor.

Negatively regulates transcription of bacterial ribonucleotide reductase nrd genes and operons by binding to NrdR-boxes. The protein is Transcriptional repressor NrdR of Corynebacterium diphtheriae (strain ATCC 700971 / NCTC 13129 / Biotype gravis).